We begin with the raw amino-acid sequence, 457 residues long: MDHLPIFCQLRDRDCLIVGGGDVAERKARLLLDAGARLTVNALAFIPQFTAWADAGMLTLVEGPFDESLLDTCWLAIAATDDDALNQRVSEAAEARHIFCNVVDAPKAASFIMPSIIDRSPLMVAVSSGGTSPVLARLLREKLESLLPLHLGQVAKYAGQLRGRVKQQFATMGERRRFWEKLFVNDRLAQSLANNDQKAITETTEQLINEPLDHRGEVVLVGAGPGDAGLLTLKGLQQIQQADVVVYDRLVSDDIMNLVRRDADRVFVGKRAGYHCVPQEEINQILLREAQKGKRVVRLKGGDPFIFGRGGEELETLCNAGIPFSVVPGITAASGCSAYSGIPLTHRDYAQSVRLITGHLKTGGELDWENLAAEKQTLVFYMGLNQAATIQQKLIEHGMPGEMPVAIVENGTAVTQRVIDGTLTQLGELAQQMNSPSLIIIGRVVGLRDKLNWFSNH.

Positions 1-204 (MDHLPIFCQL…NDQKAITETT (204 aa)) are precorrin-2 dehydrogenase /sirohydrochlorin ferrochelatase. Residues 22 to 23 (DV) and 43 to 44 (LA) each bind NAD(+). Residue S128 is modified to Phosphoserine. The interval 216–457 (GEVVLVGAGP…RDKLNWFSNH (242 aa)) is uroporphyrinogen-III C-methyltransferase. Position 225 (P225) interacts with S-adenosyl-L-methionine. Catalysis depends on D248, which acts as the Proton acceptor. K270 acts as the Proton donor in catalysis. S-adenosyl-L-methionine-binding positions include 301–303 (GGD), I306, 331–332 (TA), M382, and G411.

In the N-terminal section; belongs to the precorrin-2 dehydrogenase / sirohydrochlorin ferrochelatase family. This sequence in the C-terminal section; belongs to the precorrin methyltransferase family.

It carries out the reaction uroporphyrinogen III + 2 S-adenosyl-L-methionine = precorrin-2 + 2 S-adenosyl-L-homocysteine + H(+). It catalyses the reaction precorrin-2 + NAD(+) = sirohydrochlorin + NADH + 2 H(+). The enzyme catalyses siroheme + 2 H(+) = sirohydrochlorin + Fe(2+). Its pathway is cofactor biosynthesis; adenosylcobalamin biosynthesis; precorrin-2 from uroporphyrinogen III: step 1/1. It functions in the pathway cofactor biosynthesis; adenosylcobalamin biosynthesis; sirohydrochlorin from precorrin-2: step 1/1. It participates in porphyrin-containing compound metabolism; siroheme biosynthesis; precorrin-2 from uroporphyrinogen III: step 1/1. The protein operates within porphyrin-containing compound metabolism; siroheme biosynthesis; siroheme from sirohydrochlorin: step 1/1. Its pathway is porphyrin-containing compound metabolism; siroheme biosynthesis; sirohydrochlorin from precorrin-2: step 1/1. In terms of biological role, multifunctional enzyme that catalyzes the SAM-dependent methylations of uroporphyrinogen III at position C-2 and C-7 to form precorrin-2 via precorrin-1. Then it catalyzes the NAD-dependent ring dehydrogenation of precorrin-2 to yield sirohydrochlorin. Finally, it catalyzes the ferrochelation of sirohydrochlorin to yield siroheme. This Escherichia coli O157:H7 (strain EC4115 / EHEC) protein is Siroheme synthase.